The following is a 319-amino-acid chain: MSPNGSDRSPRRPMRRKLLQALTAGLVLATATGCTYKDFPRLGMPTPVTEEAPRILSLWQGSWAAALATGVLVWGLILWATIFHRRSRTKVEVPPQTRYNMPIEALYTVVPLIIVSVLFYFTARDESKLLDLSKKPDVTVNVVGFQWSWGFNYIENVDGSTGNAKTDKNLAAIPDRFKEAFPANAGGVYDVGTPGTRNPQTNNPGPTLWLPKGKTVRFVLTSRDVIHSFWVVPFLMKQDVIPGHTNSFQVTPNREGTFLGKCAELCGVDHSRMLFNVKVVSPERYQQHLKDLAKKGQTGYVPAGIAQTSHEKNRETNNL.

An N-terminal signal peptide occupies residues 1–33 (MSPNGSDRSPRRPMRRKLLQALTAGLVLATATG). The next 2 membrane-spanning stretches (helical) occupy residues 63 to 83 (WAAA…ATIF) and 101 to 121 (MPIE…LFYF). Cu cation contacts are provided by His-227, Cys-262, Cys-266, and His-270.

Belongs to the cytochrome c oxidase subunit 2 family. Requires Cu cation as cofactor. Heme is required as a cofactor.

The protein resides in the cell membrane. The catalysed reaction is 4 Fe(II)-[cytochrome c] + O2 + 8 H(+)(in) = 4 Fe(III)-[cytochrome c] + 2 H2O + 4 H(+)(out). In terms of biological role, subunits I and II form the functional core of the enzyme complex. Electrons originating in cytochrome c are transferred via heme a and Cu(A) to the binuclear center formed by heme a3 and Cu(B). The protein is Probable cytochrome c oxidase subunit 2 (ctaC) of Streptomyces avermitilis (strain ATCC 31267 / DSM 46492 / JCM 5070 / NBRC 14893 / NCIMB 12804 / NRRL 8165 / MA-4680).